A 294-amino-acid polypeptide reads, in one-letter code: Metallophosphoesterase MPPED2 (294 aa).

Mn(2+) contacts are provided by aspartate 65, histidine 67, aspartate 86, asparagine 117, and histidine 213. Residue 117 to 118 coordinates GMP; it reads NH. GMP is bound by residues 225–226 and 252–255; these read KE and GIHE. Histidine 254 is a Mn(2+) binding site.

Belongs to the UPF0046 family. In terms of assembly, homodimer. It depends on Mn(2+) as a cofactor. The cofactor is Co(2+). In terms of tissue distribution, expressed predominantly in fetal brain.

Inhibited by nmolar levels of AMP and GMP. Displays low metallophosphoesterase activity (in vitro). May play a role in the development of the nervous system. The sequence is that of Metallophosphoesterase MPPED2 (MPPED2) from Homo sapiens (Human).